A 604-amino-acid chain; its full sequence is Ran-binding protein 10 (604 aa).

Residues 23 to 210 (LNERLKRLYP…VDANFGQQPF (188 aa)) form the B30.2/SPRY domain. Residues 241–273 (WQAVLQNMVSSYLVHHGYCATAMAFARATETMI) form the LisH domain. One can recognise a CTLH domain in the interval 279 to 336 (SIKNRQRIQKLVLAGRVGEAIDATQQLYPGLLEHNPNLLFMLKCRQFVEMVNGTDSEV). Residues 342-454 (RSPKSQDSYP…HYSNGVTESS (113 aa)) form a disordered region. 2 stretches are compositionally biased toward polar residues: residues 343-356 (SPKS…SPNM) and 371-396 (GADS…YTGI). A compositionally biased stretch (low complexity) spans 397-420 (SSASSSPSSSPSSVNYSESNSTDS). Over residues 421 to 434 (TKSQPHSATSNQET) the composition is skewed to polar residues.

This sequence belongs to the RANBP9/10 family.

In terms of biological role, may act as an adapter protein to couple membrane receptors to intracellular signaling pathways. The sequence is that of Ran-binding protein 10 (ranbp10) from Danio rerio (Zebrafish).